The sequence spans 267 residues: Cell division protein FtsQ (267 aa).

At 1–32 (MRKKTSSNKKKQTKKTNNISLRRKLRLIYKKA) the chain is on the cytoplasmic side. The helical transmembrane segment at 33-53 (ILGLKIALIIFVCLFVFTKYF) threads the bilayer. Residues 54–267 (AGIKTYLTTN…DKNKYYIEKY (214 aa)) lie on the Periplasmic side of the membrane. One can recognise a POTRA domain in the interval 73–141 (FKLENVIIEG…NTVYIKLFER (69 aa)).

It belongs to the FtsQ/DivIB family. FtsQ subfamily.

It localises to the cell inner membrane. Essential cell division protein. This Rickettsia felis (strain ATCC VR-1525 / URRWXCal2) (Rickettsia azadi) protein is Cell division protein FtsQ.